Here is a 205-residue protein sequence, read N- to C-terminus: Translation initiation factor 2 subunit beta (205 aa).

Positions 145 to 203 (GIEIGKEYTVTIESTGSAGEGIARYQGYTIYVPKAKKGERVKIIIRKIKRNVAIAELAD) constitute a TRAM domain.

Belongs to the eIF-2-beta/eIF-5 family. As to quaternary structure, heterotrimer composed of an alpha, a beta and a gamma chain.

Functionally, eIF-2 functions in the early steps of protein synthesis by forming a ternary complex with GTP and initiator tRNA. The sequence is that of Translation initiation factor 2 subunit beta from Picrophilus torridus (strain ATCC 700027 / DSM 9790 / JCM 10055 / NBRC 100828 / KAW 2/3).